Here is a 129-residue protein sequence, read N- to C-terminus: Small ribosomal subunit protein uS11 (129 aa).

The protein belongs to the universal ribosomal protein uS11 family. Part of the 30S ribosomal subunit. Interacts with proteins S7 and S18. Binds to IF-3.

Its function is as follows. Located on the platform of the 30S subunit, it bridges several disparate RNA helices of the 16S rRNA. Forms part of the Shine-Dalgarno cleft in the 70S ribosome. This Vibrio campbellii (strain ATCC BAA-1116) protein is Small ribosomal subunit protein uS11.